The chain runs to 149 residues: 6,7-dimethyl-8-ribityllumazine synthase (149 aa).

5-amino-6-(D-ribitylamino)uracil-binding positions include Phe22, 56–58 (ALE), and 80–82 (AVI). 85–86 (ET) is a (2S)-2-hydroxy-3-oxobutyl phosphate binding site. His88 functions as the Proton donor in the catalytic mechanism. Asn113 contacts 5-amino-6-(D-ribitylamino)uracil. Arg127 contacts (2S)-2-hydroxy-3-oxobutyl phosphate.

Belongs to the DMRL synthase family.

It carries out the reaction (2S)-2-hydroxy-3-oxobutyl phosphate + 5-amino-6-(D-ribitylamino)uracil = 6,7-dimethyl-8-(1-D-ribityl)lumazine + phosphate + 2 H2O + H(+). Its pathway is cofactor biosynthesis; riboflavin biosynthesis; riboflavin from 2-hydroxy-3-oxobutyl phosphate and 5-amino-6-(D-ribitylamino)uracil: step 1/2. Its function is as follows. Catalyzes the formation of 6,7-dimethyl-8-ribityllumazine by condensation of 5-amino-6-(D-ribitylamino)uracil with 3,4-dihydroxy-2-butanone 4-phosphate. This is the penultimate step in the biosynthesis of riboflavin. The chain is 6,7-dimethyl-8-ribityllumazine synthase from Methylobacillus flagellatus (strain ATCC 51484 / DSM 6875 / VKM B-1610 / KT).